The chain runs to 593 residues: ETS-related transcription factor Elf-2 (593 aa).

The tract at residues M1–A34 is disordered. S107 bears the Phosphoserine mark. The interval V146–K199 is disordered. Positions M171–K181 are enriched in basic residues. A Phosphothreonine modification is found at T182. The segment covering T182 to S191 has biased composition (polar residues). Phosphoserine occurs at positions 185 and 191. Residues T208 to K290 constitute a DNA-binding region (ETS). Residues T362 to A383 form a disordered region. Phosphoserine is present on residues S363 and S372. Positions S370 to A383 are enriched in low complexity. Residue T376 is modified to Phosphothreonine. Phosphoserine is present on S432. R496 bears the Omega-N-methylarginine mark. T523 is modified (phosphothreonine). A Glycyl lysine isopeptide (Lys-Gly) (interchain with G-Cter in SUMO2) cross-link involves residue K538.

The protein belongs to the ETS family. As to quaternary structure, interacts with LIM domains of LMO2. Interacts via its N-terminal region with RUNX1. As to expression, expressed in all tissues examined. Highest levels in thymocytes and bone marrow.

It localises to the nucleus. In terms of biological role, probably transcriptionally activates the LYN and BLK promoters and acts synergistically with RUNX1 to transactivate the BLK promoter. The polypeptide is ETS-related transcription factor Elf-2 (Mus musculus (Mouse)).